Here is a 273-residue protein sequence, read N- to C-terminus: Formamidopyrimidine-DNA glycosylase (273 aa).

Proline 2 acts as the Schiff-base intermediate with DNA in catalysis. Catalysis depends on glutamate 3, which acts as the Proton donor. Catalysis depends on lysine 59, which acts as the Proton donor; for beta-elimination activity. Residues histidine 92 and arginine 111 each coordinate DNA. The FPG-type zinc finger occupies 239-273 (KVYGKTGEPCVICGTPIEKIKLNGRGTHFCPHCQK). Catalysis depends on arginine 263, which acts as the Proton donor; for delta-elimination activity.

The protein belongs to the FPG family. In terms of assembly, monomer. Zn(2+) serves as cofactor.

It catalyses the reaction Hydrolysis of DNA containing ring-opened 7-methylguanine residues, releasing 2,6-diamino-4-hydroxy-5-(N-methyl)formamidopyrimidine.. The catalysed reaction is 2'-deoxyribonucleotide-(2'-deoxyribose 5'-phosphate)-2'-deoxyribonucleotide-DNA = a 3'-end 2'-deoxyribonucleotide-(2,3-dehydro-2,3-deoxyribose 5'-phosphate)-DNA + a 5'-end 5'-phospho-2'-deoxyribonucleoside-DNA + H(+). Its function is as follows. Involved in base excision repair of DNA damaged by oxidation or by mutagenic agents. Acts as a DNA glycosylase that recognizes and removes damaged bases. Has a preference for oxidized purines, such as 7,8-dihydro-8-oxoguanine (8-oxoG). Has AP (apurinic/apyrimidinic) lyase activity and introduces nicks in the DNA strand. Cleaves the DNA backbone by beta-delta elimination to generate a single-strand break at the site of the removed base with both 3'- and 5'-phosphates. The polypeptide is Formamidopyrimidine-DNA glycosylase (Listeria innocua serovar 6a (strain ATCC BAA-680 / CLIP 11262)).